A 500-amino-acid chain; its full sequence is Inner membrane transporter YjeM (500 aa).

The Cytoplasmic portion of the chain corresponds to 1 to 10; it reads MTHTIKKMSL. The helical transmembrane segment at 11-31 threads the bilayer; sequence IGLILMIFTSVFGFANSPSAF. Residues 32–37 lie on the Periplasmic side of the membrane; that stretch reads YLMGYS. A helical transmembrane segment spans residues 38-58; the sequence is AIPWYIFSALLFFIPFALMMA. The Cytoplasmic portion of the chain corresponds to 59–83; the sequence is EMGSAYRKEEGGIYSWMNNSVGPRY. A helical membrane pass occupies residues 84–104; sequence AFIGTFMWFSSYVIWMVSTAA. Over 105 to 124 the chain is Periplasmic; it reads KIWVPFSTFVFGADMTQHWR. A helical transmembrane segment spans residues 125-145; it reads IAGLEPTQVVGLLAVGWMILV. The Cytoplasmic portion of the chain corresponds to 146-163; sequence TCVAARGINKIARITAVG. Residues 164 to 184 traverse the membrane as a helical segment; it reads GIAVMCLNLVLLLVSVAILLL. The Periplasmic portion of the chain corresponds to 185 to 209; that stretch reads NGGHFAQEINFTSSPNPGYHSGLAM. Residues 210–230 form a helical membrane-spanning segment; that stretch reads LSFVVFAIFAYGGIEAVGGLV. The Cytoplasmic portion of the chain corresponds to 231-243; it reads DKTEKPEKNFAKG. Residues 244–264 form a helical membrane-spanning segment; it reads IVFAAIVISIGYSLAIFLWGV. The Periplasmic segment spans residues 265–308; the sequence is STNWQQILSNSAVNLGNITYILMSSLGTTLGNALNLSPEAAMTV. Residues 309–329 traverse the membrane as a helical segment; the sequence is GVWFARITGLSMFLAYTGAFF. The Cytoplasmic portion of the chain corresponds to 330–361; the sequence is TLSYSPLKAIIQGTPKALWPAPMTTLNANGMP. A helical membrane pass occupies residues 362–382; the sequence is ATAMWLQCVLVSLFILLVSFG. Residues 383–394 lie on the Periplasmic side of the membrane; that stretch reads GDTASAFYNKLT. The helical transmembrane segment at 395-415 threads the bilayer; it reads LMANVSMTLPYLFLALAFPFF. At 416–433 the chain is on the cytoplasmic side; the sequence is KARQDLERPFVLFKTKAS. Residues 434 to 454 form a helical membrane-spanning segment; it reads TLVATGVVVLVVTFANVFTII. Residues 455-462 are Periplasmic-facing; the sequence is QPVIEAGD. A helical transmembrane segment spans residues 463–483; that stretch reads WDSALWMIGGPIFFSLLAMAI. At 484-500 the chain is on the cytoplasmic side; that stretch reads YQNYSSRMSADPEWAAE.

It belongs to the amino acid-polyamine-organocation (APC) superfamily.

The protein resides in the cell inner membrane. The chain is Inner membrane transporter YjeM (yjeM) from Salmonella typhi.